A 338-amino-acid polypeptide reads, in one-letter code: 5-dehydro-2-deoxygluconokinase (338 aa).

This sequence belongs to the carbohydrate kinase PfkB family.

The catalysed reaction is 5-dehydro-2-deoxy-D-gluconate + ATP = 6-phospho-5-dehydro-2-deoxy-D-gluconate + ADP + H(+). It participates in polyol metabolism; myo-inositol degradation into acetyl-CoA; acetyl-CoA from myo-inositol: step 5/7. In terms of biological role, catalyzes the phosphorylation of 5-dehydro-2-deoxy-D-gluconate (2-deoxy-5-keto-D-gluconate or DKG) to 6-phospho-5-dehydro-2-deoxy-D-gluconate (DKGP). In Mesomycoplasma hyopneumoniae (strain 232) (Mycoplasma hyopneumoniae), this protein is 5-dehydro-2-deoxygluconokinase.